Reading from the N-terminus, the 124-residue chain is Insulin-like growth factor 1 (124 aa).

Positions 1-19 (IHFFYLGLCLLTLTSSAAA) are excised as a propeptide. A b region spans residues 20 to 48 (GPETLCGAELVDALQFVCGDRGFYFSKPT). 3 disulfides stabilise this stretch: Cys25/Cys67, Cys37/Cys80, and Cys66/Cys71. The interval 49–60 (GYGSSSRRLHHK) is c. An a region spans residues 61–81 (GIVDECCFQSCDLRRLEMYCA). Residues 82-89 (PIKPPKSA) are d. Positions 86–124 (PKSARSVRAQRHTDMPKAQKEVHLKNTSRGNTGNRNYRM) are disordered. Residues 90–124 (RSVRAQRHTDMPKAQKEVHLKNTSRGNTGNRNYRM) constitute a propeptide, e peptide. The segment covering 96 to 109 (RHTDMPKAQKEVHL) has biased composition (basic and acidic residues). Residues 110-124 (KNTSRGNTGNRNYRM) are compositionally biased toward polar residues.

It belongs to the insulin family.

Its subcellular location is the secreted. Its function is as follows. The insulin-like growth factors, isolated from plasma, are structurally and functionally related to insulin but have a much higher growth-promoting activity. Acts as a ligand for IGF1R. Binds to the alpha subunit of IGF1R, leading to the activation of the intrinsic tyrosine kinase activity which autophosphorylates tyrosine residues in the beta subunit thus initiatiating a cascade of down-stream signaling events leading to activation of the PI3K-AKT/PKB and the Ras-MAPK pathways. Binds to integrins. Its binding to integrins and subsequent ternary complex formation with integrins and IGFR1 are essential for IGF1 signaling. This Coturnix japonica (Japanese quail) protein is Insulin-like growth factor 1.